The chain runs to 394 residues: Queuine tRNA-ribosyltransferase (394 aa).

The active-site Proton acceptor is Asp-95. Substrate is bound by residues Asp-95–Phe-99, Asp-149, Gln-190, and Gly-217. An RNA binding region spans residues Gly-248 to Asp-254. Asp-267 functions as the Nucleophile in the catalytic mechanism. Positions Thr-272–Arg-276 are RNA binding; important for wobble base 34 recognition. Zn(2+) contacts are provided by Cys-305, Cys-307, Cys-310, and His-337. Residues Asn-375 to Glu-394 form a disordered region.

It belongs to the queuine tRNA-ribosyltransferase family. Homodimer. Within each dimer, one monomer is responsible for RNA recognition and catalysis, while the other monomer binds to the replacement base PreQ1. Zn(2+) is required as a cofactor.

It carries out the reaction 7-aminomethyl-7-carbaguanine + guanosine(34) in tRNA = 7-aminomethyl-7-carbaguanosine(34) in tRNA + guanine. It participates in tRNA modification; tRNA-queuosine biosynthesis. Functionally, catalyzes the base-exchange of a guanine (G) residue with the queuine precursor 7-aminomethyl-7-deazaguanine (PreQ1) at position 34 (anticodon wobble position) in tRNAs with GU(N) anticodons (tRNA-Asp, -Asn, -His and -Tyr). Catalysis occurs through a double-displacement mechanism. The nucleophile active site attacks the C1' of nucleotide 34 to detach the guanine base from the RNA, forming a covalent enzyme-RNA intermediate. The proton acceptor active site deprotonates the incoming PreQ1, allowing a nucleophilic attack on the C1' of the ribose to form the product. After dissociation, two additional enzymatic reactions on the tRNA convert PreQ1 to queuine (Q), resulting in the hypermodified nucleoside queuosine (7-(((4,5-cis-dihydroxy-2-cyclopenten-1-yl)amino)methyl)-7-deazaguanosine). The sequence is that of Queuine tRNA-ribosyltransferase from Sorangium cellulosum (strain So ce56) (Polyangium cellulosum (strain So ce56)).